The primary structure comprises 523 residues: Lysine--tRNA ligase (523 aa).

The 'HIGH' region motif lies at 30–38 (PSGYVHVGN). D95, C99, H100, H106, C177, H180, C199, and H203 together coordinate Zn(2+). The short motif at 279 to 283 (KMSGS) is the 'KMSKS' region element.

It belongs to the class-I aminoacyl-tRNA synthetase family. Zn(2+) serves as cofactor.

It is found in the cytoplasm. The catalysed reaction is tRNA(Lys) + L-lysine + ATP = L-lysyl-tRNA(Lys) + AMP + diphosphate. The polypeptide is Lysine--tRNA ligase (lysS) (Pyrococcus furiosus (strain ATCC 43587 / DSM 3638 / JCM 8422 / Vc1)).